A 185-amino-acid polypeptide reads, in one-letter code: Nuclear transcription factor Y subunit B-3 (185 aa).

Gly residues predominate over residues 1–36 (MADGPGSPGGGGGSHESGSPRGGGGGGGGGGGGGGV). Residues 1–39 (MADGPGSPGGGGGSHESGSPRGGGGGGGGGGGGGGVREQ) form a disordered region. A DNA-binding region spans residues 43-49 (LPIANIS). Residues 70–81 (VQECVSEFISFI) are subunit association domain (SAD). The tract at residues 145-164 (KDVLGSHGGSSSSAQGMGQQ) is disordered. Low complexity predominate over residues 153 to 164 (GSSSSAQGMGQQ).

The protein belongs to the NFYB/HAP3 subunit family. In terms of assembly, heterotrimeric transcription factor composed of three components, NF-YA, NF-YB and NF-YC. NF-YB and NF-YC must interact and dimerize for NF-YA association and DNA binding. As to expression, ubiquitous.

The protein localises to the nucleus. Component of the NF-Y/HAP transcription factor complex. The NF-Y complex stimulates the transcription of various genes by recognizing and binding to a CCAAT motif in promoters. May regulate the expression of photosynthetic genes, and may be involved in chloroplast and amyloplast development. The protein is Nuclear transcription factor Y subunit B-3 (NFYB3) of Oryza sativa subsp. japonica (Rice).